A 1576-amino-acid polypeptide reads, in one-letter code: Protein Shroom (1576 aa).

Disordered regions lie at residues 1-31 (MKMR…ENNN), 46-100 (SNGA…TQAG), 112-142 (YDQT…DSTS), 187-244 (RQSH…SSTE), 267-434 (ISES…ISVT), 589-609 (VERQ…HSQS), and 621-660 (PNNL…SLLP). The segment covering 10–21 (GNGSEMGESTKS) has biased composition (polar residues). Low complexity-rich tracts occupy residues 46 to 69 (SNGA…AGSV), 76 to 91 (HNSS…GSSL), and 128 to 142 (SEGY…DSTS). Residues 189–211 (SHSHSHSHAHSHSNSHGHSHGHA) show a composition bias toward basic residues. Low complexity-rich tracts occupy residues 212–244 (HSAS…SSTE) and 267–283 (ISES…SSRV). The segment covering 305–317 (DSSPTASNSSQMM) has biased composition (polar residues). The span at 376–388 (QSTLSTQSSLLEL) shows a compositional bias: low complexity. A compositionally biased stretch (polar residues) spans 399-415 (MGQSHSMGDLQQKNPHQ). Serine 404 is subject to Phosphoserine. The interval 445 to 920 (APQPPAGKPS…LESNQQKRSN (476 aa)) is F-actin binding region required for planar polarity and cortical localization. Residues 633 to 643 (TGSNSASTRDC) show a composition bias toward polar residues. Residues serine 667 and serine 668 each carry the phosphoserine modification. Disordered stretches follow at residues 699–728 (ISFN…SSAT), 743–823 (AALA…NCFA), 849–876 (VPKK…HHAT), 910–939 (NLES…NTDP), 1036–1055 (GYGK…SQSY), 1091–1116 (PTAT…SHSD), and 1210–1244 (SFAN…DVHD). Residues 748–759 (QQHHPQQHRHAQ) are compositionally biased toward basic residues. A compositionally biased stretch (pro residues) spans 798 to 816 (PLPPPPPPEVLQPRPPPSP). Composition is skewed to polar residues over residues 910–923 (NLES…NSKA) and 1042–1055 (KPVT…SQSY). 2 stretches are compositionally biased toward pro residues: residues 1094–1108 (TPTP…PPRL) and 1217–1229 (MTPP…PPPL). Residues 1230-1239 (EPEEEEEQEE) are compositionally biased toward acidic residues. The stretch at 1232–1296 (EEEEEQEEND…LEAAREEHQT (65 aa)) forms a coiled coil. An ASD2 domain is found at 1305–1572 (RQPIELDYEQ…QLSSLSDALV (268 aa)).

It belongs to the shroom family. As to quaternary structure, monomer or homodimer. Interacts with Rok. In terms of assembly, binds (via N-terminus) to F-actin.

The protein localises to the cell junction. It is found in the adherens junction. It localises to the cytoplasm. The protein resides in the cytoskeleton. Its subcellular location is the apical cell membrane. Functionally, binds to Rho-kinase Rok and targets it to the apical cell cortex where it mediates apical constriction. During embryogenic axis elongation, required for the localization to adherens junctions and the establishment of planar polarization of both Rho-kinase Rok and myosin regulatory light chain sqh. May be involved in the assembly of microtubule arrays during cell elongation. In Drosophila melanogaster (Fruit fly), this protein is Protein Shroom.